The following is a 442-amino-acid chain: 2-oxoisovalerate dehydrogenase subunit alpha, mitochondrial (442 aa).

The N-terminal 42 residues, 1 to 42, are a transit peptide targeting the mitochondrion; the sequence is MSAAKIWRPSRGLRQAALLLLGRSGVRGLARSHPSRQQQQQF. The tract at residues 30–50 is disordered; the sequence is ARSHPSRQQQQQFPSLDDKPQ. Thiamine diphosphate contacts are provided by Tyr155 and Arg156. Residue Ser203 coordinates K(+). Ser204 provides a ligand contact to thiamine diphosphate. 3 residues coordinate K(+): Pro205, Thr208, and Gln209. Glu235 is a binding site for Mg(2+). Residues Gly236, Ala237, and Arg262 each contribute to the thiamine diphosphate site. Asn264 and Tyr266 together coordinate Mg(2+). A thiamine diphosphate-binding site is contributed by His333. The residue at position 334 (Ser334) is a Phosphoserine; by BCKDK. At Thr335 the chain carries Phosphothreonine. Phosphoserine is present on residues Ser336 and Ser344. Lys353 carries the N6-acetyllysine; alternate modification. At Lys353 the chain carries N6-succinyllysine; alternate. Lys377 is subject to N6-succinyllysine.

Belongs to the BCKDHA family. As to quaternary structure, heterotetramer of 2 alpha/BCKDHA and 2 beta chains/BCKDHB that forms the branched-chain alpha-keto acid decarboxylase (E1) component of the BCKD complex. The branched-chain alpha-ketoacid dehydrogenase is a large complex composed of three major building blocks E1, E2 and E3. It is organized around E2, a 24-meric cubic core composed of DBT, to which are associated 6 to 12 copies of E1, and approximately 6 copies of the dehydrogenase E3, a DLD dimer. Interacts with PPM1K. Thiamine diphosphate serves as cofactor. Mg(2+) is required as a cofactor. In terms of processing, phosphorylated at Ser-334 by BCKDK and dephosphorylated by protein phosphatase PPM1K.

The protein localises to the mitochondrion matrix. The catalysed reaction is N(6)-[(R)-lipoyl]-L-lysyl-[protein] + 3-methyl-2-oxobutanoate + H(+) = N(6)-[(R)-S(8)-2-methylpropanoyldihydrolipoyl]-L-lysyl-[protein] + CO2. In terms of biological role, together with BCKDHB forms the heterotetrameric E1 subunit of the mitochondrial branched-chain alpha-ketoacid dehydrogenase (BCKD) complex. The BCKD complex catalyzes the multi-step oxidative decarboxylation of alpha-ketoacids derived from the branched-chain amino-acids valine, leucine and isoleucine producing CO2 and acyl-CoA which is subsequently utilized to produce energy. The E1 subunit catalyzes the first step with the decarboxylation of the alpha-ketoacid forming an enzyme-product intermediate. A reductive acylation mediated by the lipoylamide cofactor of E2 extracts the acyl group from the E1 active site for the next step of the reaction. In Mus musculus (Mouse), this protein is 2-oxoisovalerate dehydrogenase subunit alpha, mitochondrial.